Reading from the N-terminus, the 179-residue chain is RNA pyrophosphohydrolase (179 aa).

Residues 6–149 enclose the Nudix hydrolase domain; sequence GYRANVGIVI…KKPIYEDMLK (144 aa). Positions 38–59 match the Nudix box motif; that stretch reads GGIDFGESELDALFRELNEEIG.

Belongs to the Nudix hydrolase family. RppH subfamily. A divalent metal cation is required as a cofactor.

Accelerates the degradation of transcripts by removing pyrophosphate from the 5'-end of triphosphorylated RNA, leading to a more labile monophosphorylated state that can stimulate subsequent ribonuclease cleavage. The sequence is that of RNA pyrophosphohydrolase from Ruthia magnifica subsp. Calyptogena magnifica.